Consider the following 349-residue polypeptide: Leucine-rich repeat-containing protein 58 (349 aa).

10 LRR repeats span residues 14-34 (NLTH…NKRK), 35-56 (DVQQ…VNSF), 58-80 (HLHL…LGLT), 81-102 (KLKT…KELG), 105-125 (RLEV…QFLQ), 128-149 (TLKS…IENL), 151-173 (SLEF…ANLP), 174-195 (YLSY…LAQV), 197-217 (SLRS…ILSL), and 219-239 (QLQE…RDLT).

This is Leucine-rich repeat-containing protein 58 (lrrc58) from Xenopus tropicalis (Western clawed frog).